Reading from the N-terminus, the 259-residue chain is Protein unc-50 homolog B (259 aa).

Residues M1–S11 show a composition bias toward polar residues. The interval M1–D21 is disordered. The Cytoplasmic segment spans residues M1–P82. A helical transmembrane segment spans residues A83–L103. The Lumenal portion of the chain corresponds to D104 to E109. The chain crosses the membrane as a helical span at residues T110–A130. Residues T131–D158 are Cytoplasmic-facing. Residues V159–I179 form a helical membrane-spanning segment. The Lumenal segment spans residues N180–H181. A helical transmembrane segment spans residues V182 to I202. Topologically, residues G203 to T222 are cytoplasmic. A helical membrane pass occupies residues V223–G243. Topologically, residues W244 to R259 are lumenal.

Belongs to the unc-50 family.

The protein localises to the nucleus inner membrane. It localises to the golgi apparatus membrane. Its function is as follows. Involved in the cell surface expression of neuronal nicotinic receptors. Binds RNA. In Xenopus laevis (African clawed frog), this protein is Protein unc-50 homolog B (unc50-b).